The sequence spans 65 residues: Large ribosomal subunit protein bL35c (65 aa).

The span at 25–44 shows a compositional bias: basic residues; it reads HKASKSHLLQKKSSKQRRHL. A disordered region spans residues 25 to 45; sequence HKASKSHLLQKKSSKQRRHLS.

It belongs to the bacterial ribosomal protein bL35 family.

It localises to the plastid. The protein localises to the chloroplast. This Pyropia yezoensis (Susabi-nori) protein is Large ribosomal subunit protein bL35c.